The chain runs to 161 residues: Regulator of ribonuclease activity A (161 aa).

The protein belongs to the RraA family. In terms of assembly, homotrimer. Binds to both RNA-binding sites in the C-terminal region of Rne and to RhlB.

The protein localises to the cytoplasm. Its function is as follows. Globally modulates RNA abundance by binding to RNase E (Rne) and regulating its endonucleolytic activity. Can modulate Rne action in a substrate-dependent manner by altering the composition of the degradosome. Modulates RNA-binding and helicase activities of the degradosome. In Yersinia pseudotuberculosis serotype O:1b (strain IP 31758), this protein is Regulator of ribonuclease activity A.